A 22-amino-acid chain; its full sequence is Peptide PGLa-R1 (22 aa).

Residue Leu22 is modified to Leucine amide.

Expressed by the skin glands.

Its subcellular location is the secreted. Antimicrobial peptide. The polypeptide is Peptide PGLa-R1 (Xenopus ruwenzoriensis (Uganda clawed frog)).